Here is a 273-residue protein sequence, read N- to C-terminus: Mediator of RNA polymerase II transcription subunit 18 (273 aa).

The span at 90-106 (GAQSSAASSGDPDAPMS) shows a compositional bias: low complexity. Positions 90-114 (GAQSSAASSGDPDAPMSGTDTGTNF) are disordered.

Belongs to the Mediator complex subunit 18 family. In terms of assembly, component of the Mediator complex.

Its subcellular location is the nucleus. Functionally, component of the Mediator complex, a coactivator involved in the regulated transcription of nearly all RNA polymerase II-dependent genes. Mediator functions as a bridge to convey information from gene-specific regulatory proteins to the basal RNA polymerase II transcription machinery. Mediator is recruited to promoters by direct interactions with regulatory proteins and serves as a scaffold for the assembly of a functional preinitiation complex with RNA polymerase II and the general transcription factors. In Aspergillus oryzae (strain ATCC 42149 / RIB 40) (Yellow koji mold), this protein is Mediator of RNA polymerase II transcription subunit 18 (srb5).